The chain runs to 454 residues: Chromosomal replication initiator protein DnaA (454 aa).

The segment at 1 to 83 (MMTDSMRLVW…RPLKVLLEVA (83 aa)) is domain I, interacts with DnaA modulators. A domain II region spans residues 83–115 (AECVAEAPETPEEAPQQLCLPAFADIPRPSSGR). Positions 116–333 (LLNRDFTFDS…SGIKGLAARN (218 aa)) are domain III, AAA+ region. Positions 160, 162, 163, and 164 each coordinate ATP. The segment at 334-454 (SIMGRGIDLK…LCGKIEAGEF (121 aa)) is domain IV, binds dsDNA.

The protein belongs to the DnaA family. As to quaternary structure, oligomerizes as a right-handed, spiral filament on DNA at oriC.

It localises to the cytoplasm. Its function is as follows. Plays an essential role in the initiation and regulation of chromosomal replication. ATP-DnaA binds to the origin of replication (oriC) to initiate formation of the DNA replication initiation complex once per cell cycle. Binds the DnaA box (a 9 base pair repeat at the origin) and separates the double-stranded (ds)DNA. Forms a right-handed helical filament on oriC DNA; dsDNA binds to the exterior of the filament while single-stranded (ss)DNA is stabiized in the filament's interior. The ATP-DnaA-oriC complex binds and stabilizes one strand of the AT-rich DNA unwinding element (DUE), permitting loading of DNA polymerase. After initiation quickly degrades to an ADP-DnaA complex that is not apt for DNA replication. Binds acidic phospholipids. The chain is Chromosomal replication initiator protein DnaA from Desulfatibacillum aliphaticivorans.